The primary structure comprises 27 residues: 23S rRNA methylase leader peptide (27 aa).

Functionally, this peptide is involved in the control mechanism of the synthesis of the erythromycin resistance protein. This Enterococcus faecalis (Streptococcus faecalis) protein is 23S rRNA methylase leader peptide (ermC).